A 489-amino-acid polypeptide reads, in one-letter code: Trehalose-6-phosphate synthase (489 aa).

Arg-22 contacts D-glucose 6-phosphate. 42-43 (GG) contacts UDP-alpha-D-glucose. D-glucose 6-phosphate is bound by residues Tyr-94 and Asp-148. Positions 290 and 295 each coordinate UDP-alpha-D-glucose. Arg-328 contributes to the D-glucose 6-phosphate binding site. A UDP-alpha-D-glucose-binding site is contributed by 393 to 397 (LVAKE).

This sequence belongs to the glycosyltransferase 20 family. In terms of assembly, homotetramer.

The catalysed reaction is ADP-alpha-D-glucose + D-glucose 6-phosphate = alpha,alpha-trehalose 6-phosphate + ADP + H(+). It catalyses the reaction CDP-alpha-D-glucose + D-glucose 6-phosphate = alpha,alpha-trehalose 6-phosphate + CDP + H(+). The enzyme catalyses GDP-alpha-D-glucose + D-glucose 6-phosphate = alpha,alpha-trehalose 6-phosphate + GDP + H(+). It carries out the reaction TDP-alpha-D-glucose + D-glucose 6-phosphate = 5-methyl-UDP + alpha,alpha-trehalose 6-phosphate + H(+). The catalysed reaction is D-glucose 6-phosphate + UDP-alpha-D-glucose = alpha,alpha-trehalose 6-phosphate + UDP + H(+). The protein operates within glycan biosynthesis; trehalose biosynthesis. Its function is as follows. Probably involved in the osmoprotection via the biosynthesis of trehalose and in the production of glycogen and alpha-glucan via the TreS-Pep2 branch involved in the biosynthesis of maltose-1-phosphate (M1P). Catalyzes the transfer of glucose from UDP-glucose (UDP-Glc) to D-glucose 6-phosphate (Glc-6-P) to form trehalose-6-phosphate. Probably also able to use ADP-Glc, CDP-Glc, GDP-Glc and TDP-Glc as glucosyl donors. The sequence is that of Trehalose-6-phosphate synthase from Mycobacterium sp. (strain KMS).